The primary structure comprises 103 residues: High-potential iron-sulfur protein (103 aa).

The N-terminal stretch at 1–28 (MSNRRLFLKSIPIMAAAGAVGMAGLARA) is a signal peptide. Positions 66, 69, 82, and 96 each coordinate [4Fe-4S] cluster.

It belongs to the high-potential iron-sulfur protein (HiPIP) family. Homodimer.

Its subcellular location is the periplasm. Functionally, specific class of high-redox-potential 4Fe-4S ferredoxins. Functions in anaerobic electron transport in most purple and in some other photosynthetic bacteria and in at least one genus (Paracoccus) of halophilic, denitrifying bacteria. The sequence is that of High-potential iron-sulfur protein (hip) from Ralstonia nicotianae (strain ATCC BAA-1114 / GMI1000) (Ralstonia solanacearum).